The primary structure comprises 493 residues: Voltage-gated potassium channel regulatory subunit KCNF1 (493 aa).

At 1 to 183 (MDASAEQSLP…KPESSCPARV (183 aa)) the chain is on the cytoplasmic side. The helical transmembrane segment at 184-204 (VAVLSFLLILVSSVVMCMGTI) threads the bilayer. Over 205–223 (PELQVVDSEGNRVEHPTLE) the chain is Extracellular. A helical membrane pass occupies residues 224-244 (NVETACIGWFTLEYLLRLFSS). Topologically, residues 245-249 (PNKLH) are cytoplasmic. Residues 250 to 270 (FALSFMNIVDVLAILPFYVSL) traverse the membrane as a helical segment. The Extracellular portion of the chain corresponds to 271-289 (TLTHLGARMMELTNVQQAV). Residues 290-310 (QALRIMRIARIFKLARHSSGL) form a helical; Voltage-sensor membrane-spanning segment. Topologically, residues 311–324 (QTLTYALKRSFKEL) are cytoplasmic. A helical transmembrane segment spans residues 325-345 (GLLLMYLAVGIFVFSALGYTM). The Extracellular segment spans residues 346–357 (EQSHPETLFKSI). An intramembrane region (pore-forming) is located at residues 358–378 (PQSFWWAIITMTTVGYGDIYP). The short motif at 370–375 (TVGYGD) is the Selectivity filter element. Topologically, residues 379–385 (KTTLGKL) are extracellular. A helical membrane pass occupies residues 386-406 (NAAISFLCGVIAIALPIHPII). Topologically, residues 407–493 (NNFVRYYNKQ…HHRTRLQSCK (87 aa)) are cytoplasmic. The segment at 433–468 (NSSSAESKPGGSRSDLDTLPPEPAAREGPSWGSRLK) is disordered.

The protein belongs to the potassium channel family. F (TC 1.A.1.2) subfamily. Kv5.1/KCNF1 sub-subfamily. As to quaternary structure, heterotetramer with KCNB1 or KCNB2. In terms of tissue distribution, expressed in brain namely in the piriform cortex, olfactory tubercle, and medial habenular nucleus. Also expressed in the medial amygdaloid nuclei and the lateral amygdaloid area.

The protein localises to the cell membrane. Regulatory alpha-subunit of the voltage-gated potassium (Kv) channel which, when coassembled with KCNB1 or KCNB2, can modulate their expression and their gating kinetics by acting on deactivation upon repolarization and inactivation during maintained depolarization. Accelerates inactivation but has relatively little effect on deactivation. Coexpression with KCNB1 or KCNB2 markedly slows inactivation. Each modulatory subunit has its own specific properties of regulation, and can lead to extensive inhibitions, to large changes in kinetics, and/or to large shifts in the voltage dependencies of the inactivation process. The gating kinetics depends on the nature and stoichiometry of the associated regulatory sunbunit. Fails to produce a potassium current when expressed alone. The polypeptide is Voltage-gated potassium channel regulatory subunit KCNF1 (Rattus norvegicus (Rat)).